The sequence spans 428 residues: Sialidase-3 (428 aa).

An FRIP motif motif is present at residues 24-27 (YRIP). Positions 25 and 45 each coordinate substrate. Residue Asp50 is the Proton acceptor of the active site. The BNR 1 repeat unit spans residues 129–140 (ICSQDAGYSWSD). Tyr179 and Tyr181 together coordinate substrate. A BNR 2 repeat occupies 203-214 (IYSDDLGATWHH). Positions 225 and 245 each coordinate substrate. The BNR 3 repeat unit spans residues 254-265 (ALSIDHGECFQK). At Ser314 the chain carries Phosphoserine. Arg341 contacts substrate. The active-site Nucleophile is the Tyr371. The active site involves Glu388.

It belongs to the glycosyl hydrolase 33 family. In terms of assembly, interacts with CAV1; this interaction enhances NEU3 sialidase activity within caveola. Interacts with EGFR; this interaction mediates desialylation of EGFR and enhances downstream signaling. Post-translationally, palmitoylated; may regulate intracellular trafficking and anchorage to plasma membrane and endomembranes. Expressed in brain.

Its subcellular location is the cell membrane. It localises to the membrane. The protein localises to the caveola. It is found in the early endosome membrane. The protein resides in the recycling endosome membrane. Its subcellular location is the lysosome membrane. The enzyme catalyses Hydrolysis of alpha-(2-&gt;3)-, alpha-(2-&gt;6)-, alpha-(2-&gt;8)- glycosidic linkages of terminal sialic acid residues in oligosaccharides, glycoproteins, glycolipids, colominic acid and synthetic substrates.. It catalyses the reaction a ganglioside GD1a + H2O = a ganglioside GM1 + N-acetylneuraminate. The catalysed reaction is a ganglioside GD1a (d18:1(4E)) + H2O = a ganglioside GM1 (d18:1(4E)) + N-acetylneuraminate. It carries out the reaction a ganglioside GD1b + H2O = a ganglioside GM1 + N-acetylneuraminate. The enzyme catalyses a ganglioside GD1b (d18:1(4E)) + H2O = a ganglioside GM1 (d18:1(4E)) + N-acetylneuraminate. It catalyses the reaction a ganglioside GD3 + H2O = a ganglioside GM3 + N-acetylneuraminate. The catalysed reaction is a ganglioside GD3 (d18:1(4E)) + H2O = a ganglioside GM3 (d18:1(4E)) + N-acetylneuraminate. It carries out the reaction a ganglioside GM3 + H2O = a beta-D-galactosyl-(1-&gt;4)-beta-D-glucosyl-(1&lt;-&gt;1)-ceramide + N-acetylneuraminate. The enzyme catalyses a ganglioside GM1 + H2O = a ganglioside GA1 + N-acetylneuraminate. It catalyses the reaction a ganglioside GM1 (d18:1(4E)) + H2O = a ganglioside GA1 (d18:1(4E)) + N-acetylneuraminate. The catalysed reaction is a ganglioside GM2 (d18:1(4E)) + H2O = a ganglioside GA2 (d18:1(4E)) + N-acetylneuraminate. It carries out the reaction a ganglioside GM3 (d18:1(4E)) + H2O = a beta-D-Gal-(1-&gt;4)-beta-D-Glc-(1&lt;-&gt;1)-Cer(d18:1(4E)) + N-acetylneuraminate. The enzyme catalyses a ganglioside GT1b + H2O = a ganglioside GD1b + N-acetylneuraminate. Functionally, exo-alpha-sialidase that catalyzes the hydrolytic cleavage of the terminal sialic acid (N-acetylneuraminic acid, Neu5Ac) of a glycan moiety in the catabolism of glycolipids, glycoproteins and oligosacharides. Displays high catalytic efficiency for gangliosides including alpha-(2-&gt;3)-sialylated GD1a and GM3 and alpha-(2-&gt;8)-sialylated GD3. Plays a role in the regulation of transmembrane signaling through the modulation of ganglioside content of the lipid bilayer and by direct interaction with signaling receptors, such as EGFR. Desialylates EGFR and activates downstream signaling in proliferating cells. Contributes to clathrin-mediated endocytosis by regulating sorting of endocytosed receptors to early and recycling endosomes. The protein is Sialidase-3 (NEU3) of Bos taurus (Bovine).